We begin with the raw amino-acid sequence, 595 residues long: NADH-quinone oxidoreductase subunit C/D (595 aa).

The tract at residues methionine 1–glutamine 186 is NADH dehydrogenase I subunit C. Residues aspartate 210–arginine 595 form an NADH dehydrogenase I subunit D region.

The protein in the N-terminal section; belongs to the complex I 30 kDa subunit family. In the C-terminal section; belongs to the complex I 49 kDa subunit family. NDH-1 is composed of 13 different subunits. Subunits NuoB, CD, E, F, and G constitute the peripheral sector of the complex.

The protein localises to the cell inner membrane. The catalysed reaction is a quinone + NADH + 5 H(+)(in) = a quinol + NAD(+) + 4 H(+)(out). In terms of biological role, NDH-1 shuttles electrons from NADH, via FMN and iron-sulfur (Fe-S) centers, to quinones in the respiratory chain. The immediate electron acceptor for the enzyme in this species is believed to be ubiquinone. Couples the redox reaction to proton translocation (for every two electrons transferred, four hydrogen ions are translocated across the cytoplasmic membrane), and thus conserves the redox energy in a proton gradient. This chain is NADH-quinone oxidoreductase subunit C/D, found in Acinetobacter baumannii (strain AYE).